The following is a 327-amino-acid chain: 3' cyclic ADP-D-ribose synthase AaTIR (327 aa).

Residues 10–120 are TIR domain; the sequence is VALSFAGENR…GILKTIGYIN (111 aa). Lys229 is a catalytic residue.

As to quaternary structure, homodimer.

It catalyses the reaction NADP(+) + H2O = ADP-D-ribose 2'-phosphate + nicotinamide + H(+). The catalysed reaction is NAD(+) = 3'cADPR + nicotinamide + H(+). Functionally, NAD(+) hydrolase (NADase) that generates 3'cADPR, a cyclization variant of cyclic ADP-D-ribose (also called v2-cADPR). Also cleaves NADP(+), but does not cyclize the product. The protein is 3' cyclic ADP-D-ribose synthase AaTIR of Aquimarina amphilecti.